The sequence spans 310 residues: MDVLVTGGAGFIGSNFVRYLLDNSDDSVVTLDALTYAGSRDNLAGYLDHPNHRFVEGDIRDRELVDDLVADADVIVNFAAESHVDRSIGGAEPFVSTNVQGTQTLLDAALDADIDRFLQISTDEVYGEIHDGKFTEDDPLAPRNPYSATKAGADLLVRSYRETHDLPTLITRTCNNFGPRQHPEKLIPKFIQRAANGETLPVYGDGSNVREWIYVEDNCAALDVVLREGDIGEVYNIGSGVELSNLETTEKILEAVGGSEDQIEFVEDRAGHDQRYAIDATKTKALGWEPEWSFEDGLEACVDYYLGDDE.

NAD(+) contacts are provided by residues 7–13 (GGAGFIG), 32–35 (DALT), and 58–59 (DI). Serine 82 lines the substrate pocket. Residue threonine 97 participates in NAD(+) binding. Residues threonine 122 and 122-124 (TDE) each bind substrate. Catalysis depends on aspartate 123, which acts as the Proton donor. Residues glutamate 124 and tyrosine 146 each act as proton acceptor in the active site. Residue 146–150 (YSATK) coordinates NAD(+). Asparagine 175 serves as a coordination point for substrate. Asparagine 176 contributes to the NAD(+) binding site. Residues 185–186 (KL), 201–203 (PVY), arginine 210, asparagine 245, and 269–272 (RAGH) contribute to the substrate site.

This sequence belongs to the NAD(P)-dependent epimerase/dehydratase family. dTDP-glucose dehydratase subfamily. NAD(+) serves as cofactor.

The protein operates within protein modification; protein glycosylation. It functions in the pathway cell surface structure biogenesis; S-layer biogenesis. Its function is as follows. Lyase involved in N-glycan biosynthetic pathway that takes place under low-salt conditions (1.75 M instead of 3.4 M). Participates in the formation of the tetrasaccharide present at 'Asn-532' of S-layer glycoprotein Csg, consisting of a sulfated hexose, 2 hexoses and rhamnose. Involved in the addition of final rhamnose (sugar 4) of the tetrasaccharide on the dolichol phosphate carrier. This Haloferax volcanii (strain ATCC 29605 / DSM 3757 / JCM 8879 / NBRC 14742 / NCIMB 2012 / VKM B-1768 / DS2) (Halobacterium volcanii) protein is Low-salt glycan biosynthesis protein Agl12 (agl12).